Reading from the N-terminus, the 604-residue chain is DNA polymerase alpha subunit B (604 aa).

The interval 109–171 (ETLLNSYTTP…KYSSRSNRGE (63 aa)) is disordered. The span at 113–141 (NSYTTPSKGSQKRTITTPETPLTKRSVSA) shows a compositional bias: polar residues. Residues Thr129 and Thr132 each carry the phosphothreonine modification. Phosphoserine is present on residues Ser143, Ser149, Ser154, and Ser156. The span at 143-160 (SPHQLLSPSSFSPSATPP) shows a compositional bias: low complexity.

It belongs to the DNA polymerase alpha subunit B family. As to quaternary structure, component of the alpha DNA polymerase complex (also known as the alpha DNA polymerase-primase complex) consisting of four subunits: the catalytic subunit POLA1, the regulatory subunit POLA2, and the primase complex subunits PRIM1 and PRIM2 respectively. Within the complex, POLA1 directly interacts with PRIM2. Phosphorylated in a cell cycle-dependent manner, in G2/M phase.

It is found in the nucleus. Accessory subunit of the DNA polymerase alpha complex (also known as the alpha DNA polymerase-primase complex) which plays an essential role in the initiation of DNA synthesis. During the S phase of the cell cycle, the DNA polymerase alpha complex (composed of a catalytic subunit POLA1, an accessory subunit POLA2 and two primase subunits, the catalytic subunit PRIM1 and the regulatory subunit PRIM2) is recruited to DNA at the replicative forks via direct interactions with MCM10 and WDHD1. The primase subunit of the polymerase alpha complex initiates DNA synthesis by oligomerising short RNA primers on both leading and lagging strands. These primers are initially extended by the polymerase alpha catalytic subunit and subsequently transferred to polymerase delta and polymerase epsilon for processive synthesis on the lagging and leading strand, respectively. The protein is DNA polymerase alpha subunit B (POLA2) of Bos taurus (Bovine).